Consider the following 188-residue polypeptide: MPKASDIKKGSAIEHNGKVFFVKEISKLTPSGRAGATLFRMRMYDVATGAKSDESFKADDMINLADFSRRSATFSYVDGNEYVFMDSEDYTPYNFNKEAIEEELLFITEETQGLQILIVDGAPVAIELPSAVDLEIVETAPSIKGASASARTKPATMTTGLTVQVPEYIANGEKVKINTTEHKFMSRA.

The protein belongs to the elongation factor P family.

This is Elongation factor P-like protein from Aliivibrio fischeri (strain ATCC 700601 / ES114) (Vibrio fischeri).